Reading from the N-terminus, the 529-residue chain is ATP synthase F(1) complex catalytic subunit beta, mitochondrial (529 aa).

A mitochondrion-targeting transit peptide spans 1 to 46 (MLSLVGRVASASASGALRGLNPLAALPQAHLLLRTAPAGVHPARDY). Residue serine 106 is glycosylated (O-linked (GlcNAc) serine). An N6-acetyllysine; alternate mark is found at lysine 124, lysine 133, and lysine 161. N6-succinyllysine; alternate occurs at positions 124, 133, and 161. Residue lysine 198 is modified to N6-acetyllysine. ADP is bound by residues glycine 209, valine 210, glycine 211, lysine 212, threonine 213, and valine 214. Residue glycine 209 participates in ATP binding. Phosphate is bound by residues glycine 209, valine 210, glycine 211, lysine 212, and threonine 213. Positions 211, 212, 213, and 214 each coordinate ATP. A Mg(2+)-binding site is contributed by threonine 213. Residue glutamate 238 participates in Mg(2+) binding. Arginine 239 serves as a coordination point for ATP. N6-acetyllysine; alternate occurs at positions 259 and 264. N6-succinyllysine; alternate occurs at positions 259 and 264. Phosphothreonine is present on threonine 312. Phosphoserine is present on serine 415. The residue at position 426 (lysine 426) is an N6-acetyllysine. Serine 433 is modified (phosphoserine). An N6-acetyllysine mark is found at lysine 480 and lysine 485. Residue lysine 522 is modified to N6-acetyllysine; alternate. Lysine 522 is modified (N6-succinyllysine; alternate). Serine 529 is modified (phosphoserine).

It belongs to the ATPase alpha/beta chains family. In terms of assembly, homotrimer. Component of the ATP synthase complex composed at least of ATP5F1A/subunit alpha, ATP5F1B/subunit beta, ATP5MC1/subunit c (homooctomer), MT-ATP6/subunit a, MT-ATP8/subunit 8, ATP5ME/subunit e, ATP5MF/subunit f, ATP5MG/subunit g, ATP5MK/subunit k, ATP5MJ/subunit j, ATP5F1C/subunit gamma, ATP5F1D/subunit delta, ATP5F1E/subunit epsilon, ATP5PF/subunit F6, ATP5PB/subunit b, ATP5PD/subunit d, ATP5PO/subunit OSCP. ATP synthase complex consists of a soluble F(1) head domain (subunits alpha(3) and beta(3)) - the catalytic core - and a membrane F(0) domain - the membrane proton channel (subunits c, a, 8, e, f, g, k and j). These two domains are linked by a central stalk (subunits gamma, delta, and epsilon) rotating inside the F1 region and a stationary peripheral stalk (subunits F6, b, d, and OSCP). Interacts with PPIF. Interacts with BCL2L1 isoform BCL-X(L); the interaction mediates the association of BCL2L1 isoform BCL-X(L) with the mitochondrial membrane F(1)F(0) ATP synthase and enhances neurons metabolic efficiency. Interacts with CLN5 and PPT1. Interacts with S100A1; this interaction increases F1-ATPase activity. Interacts with MTLN. Interacts with TTC5/STRAP; the interaction results in decreased mitochondrial ATP production.

It is found in the mitochondrion inner membrane. The enzyme catalyses ATP + H2O + 4 H(+)(in) = ADP + phosphate + 5 H(+)(out). Its function is as follows. Catalytic subunit beta, of the soluble F(1) head domain within the mitochondrial ATP synthase complex (F(1)F(0) ATP synthase or complex V) that produces ATP from ADP and phosphate inorganique in the presence of a proton gradient across the membrane which is generated by electron transport complexes of the respiratory chain. With the non-catalytic subunit alpha (ATP5F1A), forms the catalytic core in the F(1) domain. ATP synthase complex consist of two structural domains, F(1) - containing the extramembraneous catalytic core, and F(0) - containing the membrane proton channel, linked together by a central stalk and a peripheral stalk. During catalysis, ATP synthesis in the catalytic domain of F(1) is coupled via a rotary mechanism of the central stalk subunits to proton translocation. In terms of biological role, catalytic subunit beta, of the mitochondrial membrane ATP synthase complex (F(1)F(0) ATP synthase or Complex V) that produces ATP from ADP in the presence of a proton gradient across the membrane which is generated by electron transport complexes of the respiratory chain. ATP synthase complex consist of a soluble F(1) head domain - the catalytic core - and a membrane F(1) domain - the membrane proton channel. These two domains are linked by a central stalk rotating inside the F(1) region and a stationary peripheral stalk. During catalysis, ATP synthesis in the catalytic domain of F(1) is coupled via a rotary mechanism of the central stalk subunits to proton translocation. In vivo, can only synthesize ATP although its ATP hydrolase activity can be activated artificially in vitro. With the subunit alpha (ATP5F1A), forms the catalytic core in the F(1) domain. This Rattus norvegicus (Rat) protein is ATP synthase F(1) complex catalytic subunit beta, mitochondrial.